The following is a 166-amino-acid chain: Chemoreceptor glutamine deamidase CheD (166 aa).

This sequence belongs to the CheD family. As to quaternary structure, forms a complex with CheC.

The catalysed reaction is L-glutaminyl-[protein] + H2O = L-glutamyl-[protein] + NH4(+). In terms of biological role, deamidates glutamine residues to glutamate on methyl-accepting chemotaxis receptors (MCPs). CheD-mediated MCP deamidation is required for productive communication of the conformational signals of the chemoreceptors to the CheA kinase. This chain is Chemoreceptor glutamine deamidase CheD, found in Bacillus velezensis (strain DSM 23117 / BGSC 10A6 / LMG 26770 / FZB42) (Bacillus amyloliquefaciens subsp. plantarum).